The primary structure comprises 1575 residues: Mediator of RNA polymerase II transcription subunit 1 (1575 aa).

The interval 1–670 (MKAQGETEDS…YGSSPLERQN (670 aa)) is interaction with the Mediator complex and THRA. The tract at residues 16–590 (MSSLLERLHA…SIKDRHESVG (575 aa)) is interaction with ESR1. Interaction with the Mediator complex regions lie at residues 108–212 (FYVE…GYLT) and 215–390 (SGGH…SLQG). The segment at 405–644 (PLILNMIRHQ…MAGNTKNHPM (240 aa)) is interaction with THRA. The interval 542–789 (PASSPGYGMT…TDILSDIAEE (248 aa)) is interaction with VDR. Phosphoserine is present on Ser588. The LXXLL motif 1 motif lies at 604 to 608 (LTSLL). 5 disordered regions span residues 609 to 706 (QITG…QTED), 737 to 760 (HITPAPSQCSTPPATYPQPVSHPQ), 791 to 818 (SKLPSTSDDCPPIGTPVRDSSSSGHSQS), 874 to 895 (SQSGFGEEYFDESSQSGDNDDF), and 951 to 1564 (SGSQ…GEED). A compositionally biased stretch (pro residues) spans 622–632 (PTPPHHTPPPV). The segment at 622-701 (PTPPHHTPPP…SSRVPPDKPK (80 aa)) is interaction with GATA1. Residues 622–701 (PTPPHHTPPP…SSRVPPDKPK (80 aa)) form an interaction with PPARGC1A and THRA region. The LXXLL motif 2 motif lies at 645–649 (LMNLL). Positions 655–675 (QDFSTLYGSSPLERQNSSSGS) are enriched in polar residues. An interaction with ESR1 region spans residues 656-1066 (DFSTLYGSSP…TPPIPKITIQ (411 aa)). Residue Ser664 is modified to Phosphoserine. The segment covering 696-706 (PPDKPKHQTED) has biased composition (basic and acidic residues). Ser795 carries the phosphoserine modification. Thr805 is modified (phosphothreonine). The span at 808-818 (RDSSSSGHSQS) shows a compositional bias: polar residues. Residues 875-902 (QSGFGEEYFDESSQSGDNDDFKGFASQA) carry the Integrase domain-binding motif (IBM) motif. A phosphoserine mark is found at Ser887, Ser953, and Ser955. Residues 963-974 (LGKEKTQKRVKE) show a composition bias toward basic and acidic residues. Positions 976 to 986 (NGTGASSGSGP) are enriched in gly residues. The residue at position 1032 (Thr1032) is a Phosphothreonine; by MAPK1 or MAPK3. The span at 1034–1051 (PTSTGGSKSPGSSGRSQT) shows a compositional bias: low complexity. A phosphothreonine mark is found at Thr1051 and Thr1057. Low complexity-rich tracts occupy residues 1078–1094 (SSHSQYTSSGSVSSSGS) and 1101–1152 (SSSS…SQTG). Position 1158 is a phosphoserine (Ser1158). Polar residues predominate over residues 1158-1184 (SPITKHGLSSGSSSTKMKPQGKPSSLM). Lys1179 is subject to N6-acetyllysine. The span at 1185-1197 (NPSISKPNISPSH) shows a compositional bias: low complexity. Phosphoserine is present on Ser1209. A Phosphothreonine modification is found at Thr1217. 2 stretches are compositionally biased toward low complexity: residues 1220–1258 (SSKAKSPISSGSSGSHVSGTSSSSGMKSSSGSASSGSVS) and 1265–1295 (SNSCTPSSSSFSSSGSSMSSSQNQHGSSKGK). A Phosphoserine modification is found at Ser1225. Residues 1251–1423 (SASSGSVSQK…KPGESGGDGL (173 aa)) are interaction with TP53. A phosphoserine mark is found at Ser1304 and Ser1349. Positions 1331 to 1352 (MGASTNSSNHPMSSKHNTSGGE) are enriched in polar residues. Residues 1354–1366 (QSKREKSDKDKSK) show a composition bias toward basic and acidic residues. Residues Ser1405 and Ser1435 each carry the phosphoserine modification. Composition is skewed to polar residues over residues 1427–1442 (IASSKNYGSPLISGST) and 1450–1484 (PSHSKSPAYTPQNVDSESESGSSIAERSYQNSPSS). At Thr1442 the chain carries Phosphothreonine. Position 1459 is a phosphothreonine; by MAPK1 or MAPK3 (Thr1459). Ser1465, Ser1467, Ser1481, Ser1483, and Ser1484 each carry phosphoserine. Positions 1498-1507 (KHKKHKKEKK) are enriched in basic residues. An N6-acetyllysine modification is found at Lys1523. Positions 1527–1545 (WSKSPISSDPTASVTNNPI) are enriched in polar residues.

This sequence belongs to the Mediator complex subunit 1 family. In terms of assembly, component of the Mediator complex, which is composed of MED1, MED4, MED6, MED7, MED8, MED9, MED10, MED11, MED12, MED13, MED13L, MED14, MED15, MED16, MED17, MED18, MED19, MED20, MED21, MED22, MED23, MED24, MED25, MED26, MED27, MED29, MED30, MED31, CCNC, CDK8 and CDC2L6/CDK11. The MED12, MED13, CCNC and CDK8 subunits form a distinct module termed the CDK8 module. Mediator containing the CDK8 module is less active than Mediator lacking this module in supporting transcriptional activation. Individual preparations of the Mediator complex lacking one or more distinct subunits have been variously termed ARC, CRSP, DRIP, PC2, SMCC and TRAP. This subunit specifically interacts with a number of nuclear receptors in a ligand-dependent fashion including AR, ESR1, ESR2, PPARA, PPARG, RORA, RXRA, RXRG, THRA, THRB and VDR. Interacts with CTNNB1, GABPA, GLI3, PPARGC1A and TP53. Interacts with GATA1 and YWHAH. Interacts with CLOCK; this interaction requires the presence of THRAP3. Interacts with CCAR1. Interacts with NR4A3. Interacts (via IBM motif) with PSIP1 (via IBD domain); phosphorylation increases its affinity for PSIP1. Interacts with USP22. Post-translationally, phosphorylated by MAPK1 or MAPK3 during G2/M phase which may enhance protein stability and promote entry into the nucleolus. Phosphorylation increases its interaction with PSIP1. In terms of tissue distribution, widely expressed in the adult, with high levels of expression in the liver, lung, intestinal mucosa, kidney cortex, thymic cortex, splenic follicle and seminiferous epithelium in testis. Also expressed in the adult heart, brain, spleen and skeletal muscle.

The protein localises to the nucleus. Component of the Mediator complex, a coactivator involved in the regulated transcription of nearly all RNA polymerase II-dependent genes. Mediator functions as a bridge to convey information from gene-specific regulatory proteins to the basal RNA polymerase II transcription machinery. Mediator is recruited to promoters by direct interactions with regulatory proteins and serves as a scaffold for the assembly of a functional preinitiation complex with RNA polymerase II and the general transcription factors. Essential for embryogenesis, including development of the central nervous system, heart, liver and placenta and for erythropoiesis. Also required for normal transcriptional control of thyroid-stimulating hormone beta (TSHB) in the pituitary. Acts as a coactivator for GATA1-mediated transcriptional activation during erythroid differentiation of K562 erythroleukemia cells. The protein is Mediator of RNA polymerase II transcription subunit 1 (Med1) of Mus musculus (Mouse).